The primary structure comprises 307 residues: Quinolinate synthase (307 aa).

His23 and Ser40 together coordinate iminosuccinate. Residue Cys86 participates in [4Fe-4S] cluster binding. Iminosuccinate is bound by residues 112-114 (YVN) and Ser129. Cys173 is a binding site for [4Fe-4S] cluster. Residues 199–201 (HPE) and Thr216 contribute to the iminosuccinate site. Cys265 is a binding site for [4Fe-4S] cluster.

This sequence belongs to the quinolinate synthase family. Type 2 subfamily. It depends on [4Fe-4S] cluster as a cofactor.

The protein resides in the cytoplasm. The catalysed reaction is iminosuccinate + dihydroxyacetone phosphate = quinolinate + phosphate + 2 H2O + H(+). Its pathway is cofactor biosynthesis; NAD(+) biosynthesis; quinolinate from iminoaspartate: step 1/1. In terms of biological role, catalyzes the condensation of iminoaspartate with dihydroxyacetone phosphate to form quinolinate. This chain is Quinolinate synthase, found in Methanocaldococcus jannaschii (strain ATCC 43067 / DSM 2661 / JAL-1 / JCM 10045 / NBRC 100440) (Methanococcus jannaschii).